We begin with the raw amino-acid sequence, 159 residues long: Transcriptional repressor NrdR (159 aa).

A compositionally biased stretch (polar residues) spans 1 to 11 (MQCPTCQNTDS). The tract at residues 1-21 (MQCPTCQNTDSRVLESRSADS) is disordered. Residues 3–34 (CPTCQNTDSRVLESRSADSGKSVRRRRECLNC) fold into a zinc finger. The 91-residue stretch at 49–139 (VSVLKKDGGR…VYRKFNGVKD (91 aa)) folds into the ATP-cone domain.

It belongs to the NrdR family. The cofactor is Zn(2+).

Negatively regulates transcription of bacterial ribonucleotide reductase nrd genes and operons by binding to NrdR-boxes. This Prochlorococcus marinus (strain AS9601) protein is Transcriptional repressor NrdR.